We begin with the raw amino-acid sequence, 152 residues long: Large ribosomal subunit protein bL9 (152 aa).

This sequence belongs to the bacterial ribosomal protein bL9 family.

Functionally, binds to the 23S rRNA. The sequence is that of Large ribosomal subunit protein bL9 from Mycoplasmopsis synoviae (strain 53) (Mycoplasma synoviae).